The chain runs to 290 residues: Nucleoid occlusion protein (290 aa).

The H-T-H motif DNA-binding region spans 153–172; sequence EALAQRLGKGQSTIANKLRL.

The protein belongs to the ParB family.

Its subcellular location is the cytoplasm. It is found in the nucleoid. Effects nucleoid occlusion by binding relatively nonspecifically to DNA and preventing the assembly of the division machinery in the vicinity of the nucleoid, especially under conditions that disturb the cell cycle. It helps to coordinate cell division and chromosome segregation by preventing the formation of the Z ring through the nucleoid, which would cause chromosome breakage. The polypeptide is Nucleoid occlusion protein (Bacillus cytotoxicus (strain DSM 22905 / CIP 110041 / 391-98 / NVH 391-98)).